The chain runs to 67 residues: ATP synthase F(0) complex subunit 8 (67 aa).

Residues 8-24 (TWFTTVLASSITLFILM) form a helical membrane-spanning segment. Position 54 is an N6-acetyllysine; alternate (K54). K54 is subject to N6-succinyllysine; alternate. K57 bears the N6-acetyllysine mark.

This sequence belongs to the ATPase protein 8 family. In terms of assembly, component of the ATP synthase complex composed at least of ATP5F1A/subunit alpha, ATP5F1B/subunit beta, ATP5MC1/subunit c (homooctomer), MT-ATP6/subunit a, MT-ATP8/subunit 8, ATP5ME/subunit e, ATP5MF/subunit f, ATP5MG/subunit g, ATP5MK/subunit k, ATP5MJ/subunit j, ATP5F1C/subunit gamma, ATP5F1D/subunit delta, ATP5F1E/subunit epsilon, ATP5PF/subunit F6, ATP5PB/subunit b, ATP5PD/subunit d, ATP5PO/subunit OSCP. ATP synthase complex consists of a soluble F(1) head domain (subunits alpha(3) and beta(3)) - the catalytic core - and a membrane F(0) domain - the membrane proton channel (subunits c, a, 8, e, f, g, k and j). These two domains are linked by a central stalk (subunits gamma, delta, and epsilon) rotating inside the F1 region and a stationary peripheral stalk (subunits F6, b, d, and OSCP). Interacts with PRICKLE3.

The protein resides in the mitochondrion membrane. In terms of biological role, subunit 8, of the mitochondrial membrane ATP synthase complex (F(1)F(0) ATP synthase or Complex V) that produces ATP from ADP in the presence of a proton gradient across the membrane which is generated by electron transport complexes of the respiratory chain. ATP synthase complex consist of a soluble F(1) head domain - the catalytic core - and a membrane F(1) domain - the membrane proton channel. These two domains are linked by a central stalk rotating inside the F(1) region and a stationary peripheral stalk. During catalysis, ATP synthesis in the catalytic domain of F(1) is coupled via a rotary mechanism of the central stalk subunits to proton translocation. In vivo, can only synthesize ATP although its ATP hydrolase activity can be activated artificially in vitro. Part of the complex F(0) domain. The polypeptide is ATP synthase F(0) complex subunit 8 (Cricetulus griseus (Chinese hamster)).